Consider the following 359-residue polypeptide: MLYQLALLLKDYWFAFNVLKYITFRSFTAVLIAFFLTLVLSPSFINRLRKIQRLFGGYVREYTPESHEVKKYTPTMGGIVILIVVTLSTLLLMRWDIKYTWVVLLSFLSFGTIGFWDDYVKLKNKKGISIKTKFLLQVLSASLISVLIYYWADIDTILYFPFFKELYVDLGVLYLPFAVFVIVGSANAVNLTDGLDGLAIGPAMTTATALGVVAYAVGHSKIAQYLNIPYVPYAGELTVFCFALVGAGLGFLWFNSFPAQMFMGDVGSLSIGASLATVALLTKSEFIFAVAAGVFVFETISVILQIIYFRWTGGKRLFKRAPFHHHLELNGLPEPKIVVRMWIISILLAIIAISMLKLR.

Residues 1 to 25 lie on the Periplasmic side of the membrane; sequence MLYQLALLLKDYWFAFNVLKYITFR. The helical transmembrane segment at 26-48 threads the bilayer; sequence SFTAVLIAFFLTLVLSPSFINRL. Topologically, residues 49–74 are cytoplasmic; it reads RKIQRLFGGYVREYTPESHEVKKYTP. Lys70 and Thr75 together coordinate muraymycin D2. Residues 75-92 traverse the membrane as a helical segment; it reads TMGGIVILIVVTLSTLLL. The Periplasmic portion of the chain corresponds to 93-98; it reads MRWDIK. Residues 99–120 form a helical membrane-spanning segment; it reads YTWVVLLSFLSFGTIGFWDDYV. Topologically, residues 121–130 are cytoplasmic; the sequence is KLKNKKGISI. The chain crosses the membrane as a helical span at residues 131–152; it reads KTKFLLQVLSASLISVLIYYWA. Topologically, residues 153 to 172 are periplasmic; that stretch reads DIDTILYFPFFKELYVDLGV. The chain crosses the membrane as a helical span at residues 173 to 194; sequence LYLPFAVFVIVGSANAVNLTDG. The muraymycin D2 site is built by Asn190, Asp193, and Asp196. The Cytoplasmic portion of the chain corresponds to 195 to 197; it reads LDG. The chain crosses the membrane as a helical span at residues 198–218; sequence LAIGPAMTTATALGVVAYAVG. Topologically, residues 219 to 233 are periplasmic; the sequence is HSKIAQYLNIPYVPY. Residues 234–255 traverse the membrane as a helical segment; it reads AGELTVFCFALVGAGLGFLWFN. Residues 256–264 lie on the Cytoplasmic side of the membrane; it reads SFPAQMFMG. Gly264 and Ser268 together coordinate muraymycin D2. The helical transmembrane segment at 265–280 threads the bilayer; sequence DVGSLSIGASLATVAL. The Periplasmic segment spans residues 281–284; it reads LTKS. Residues 285-310 form a helical membrane-spanning segment; it reads EFIFAVAAGVFVFETISVILQIIYFR. 2 residues coordinate muraymycin D2: Gln305 and Ala321. The Cytoplasmic segment spans residues 311-332; the sequence is WTGGKRLFKRAPFHHHLELNGL. A helical membrane pass occupies residues 333–355; that stretch reads PEPKIVVRMWIISILLAIIAISM. At 356-359 the chain is on the periplasmic side; it reads LKLR.

It belongs to the glycosyltransferase 4 family. MraY subfamily. Homodimer. Mg(2+) is required as a cofactor. It depends on Mn(2+) as a cofactor.

It is found in the cell inner membrane. The enzyme catalyses UDP-N-acetyl-alpha-D-muramoyl-L-alanyl-gamma-D-glutamyl-meso-2,6-diaminopimeloyl-D-alanyl-D-alanine + di-trans,octa-cis-undecaprenyl phosphate = di-trans,octa-cis-undecaprenyl diphospho-N-acetyl-alpha-D-muramoyl-L-alanyl-D-glutamyl-meso-2,6-diaminopimeloyl-D-alanyl-D-alanine + UMP. It functions in the pathway cell wall biogenesis; peptidoglycan biosynthesis. With respect to regulation, inhibited by natural nucleoside antibiotics including tunicamycin, capuramycin and muraymycin. Usually the cofactor magnesium is not required for antibiotic binding. Its function is as follows. Catalyzes the initial step of the lipid cycle reactions in the biosynthesis of the cell wall peptidoglycan: transfers peptidoglycan precursor phospho-MurNAc-pentapeptide from UDP-MurNAc-pentapeptide onto the lipid carrier undecaprenyl phosphate, yielding undecaprenyl-pyrophosphoryl-MurNAc-pentapeptide, known as lipid I. In Aquifex aeolicus (strain VF5), this protein is Phospho-N-acetylmuramoyl-pentapeptide-transferase.